The following is a 233-amino-acid chain: 3-dehydroquinate dehydratase (233 aa).

Residues 39-41 and Arg-73 each bind 3-dehydroquinate; that span reads EIR. His-132 serves as the catalytic Proton donor/acceptor. The active-site Schiff-base intermediate with substrate is the Lys-159. 2 residues coordinate 3-dehydroquinate: Arg-196 and Gln-219.

Belongs to the type-I 3-dehydroquinase family. As to quaternary structure, homodimer.

The enzyme catalyses 3-dehydroquinate = 3-dehydroshikimate + H2O. Its pathway is metabolic intermediate biosynthesis; chorismate biosynthesis; chorismate from D-erythrose 4-phosphate and phosphoenolpyruvate: step 3/7. In terms of biological role, involved in the third step of the chorismate pathway, which leads to the biosynthesis of aromatic amino acids. Catalyzes the cis-dehydration of 3-dehydroquinate (DHQ) and introduces the first double bond of the aromatic ring to yield 3-dehydroshikimate. The sequence is that of 3-dehydroquinate dehydratase from Methanococcoides burtonii (strain DSM 6242 / NBRC 107633 / OCM 468 / ACE-M).